The sequence spans 392 residues: 23S rRNA (uracil(747)-C(5))-methyltransferase RlmC (392 aa).

Residues C4, C12, C15, and C93 each coordinate [4Fe-4S] cluster. The S-adenosyl-L-methionine site is built by Q218, F247, E275, and N321. Residue C348 is the Nucleophile of the active site.

The protein belongs to the class I-like SAM-binding methyltransferase superfamily. RNA M5U methyltransferase family. RlmC subfamily.

It carries out the reaction uridine(747) in 23S rRNA + S-adenosyl-L-methionine = 5-methyluridine(747) in 23S rRNA + S-adenosyl-L-homocysteine + H(+). Functionally, catalyzes the formation of 5-methyl-uridine at position 747 (m5U747) in 23S rRNA. The sequence is that of 23S rRNA (uracil(747)-C(5))-methyltransferase RlmC from Haemophilus influenzae (strain PittGG).